The sequence spans 1862 residues: Transient receptor potential cation channel subfamily M member 7 (1862 aa).

An N-acetylmethionine modification is found at M1. Topologically, residues 1–850 (MSQKSWIEST…ITRKFYAFYH (850 aa)) are cytoplasmic. S101 carries the post-translational modification Phosphoserine. The span at 544–554 (NRRSGRNASSS) shows a compositional bias: low complexity. The tract at residues 544-574 (NRRSGRNASSSTPQLRKSHETFGNRADKKEK) is disordered. The span at 560 to 573 (KSHETFGNRADKKE) shows a compositional bias: basic and acidic residues. The chain crosses the membrane as a helical span at residues 851–876 (APIVKFWFNTLAYLGFLMLYTFVVLV). The Extracellular segment spans residues 877–882 (QMEQLP). The chain crosses the membrane as a helical span at residues 883–904 (SVQEWIVIAYIFTYAIEKIREV). Residues 905-923 (FMSEAGKISQKIKVWFSDY) are Cytoplasmic-facing. A helical membrane pass occupies residues 924–943 (FNVSDTIAIISFFVGFGLRF). The Extracellular portion of the chain corresponds to 944-956 (GAKWNYINAYDNH). A helical transmembrane segment spans residues 957–980 (VFVAGRLIYCLNIIFWYVRLLDFL). Residues 981 to 999 (AVNQQAGPYVMMIGKMVAN) are Cytoplasmic-facing. Residues 1000–1023 (MFYIVVIMALVLLSFGVPRKAILY) form a helical membrane-spanning segment. Topologically, residues 1024-1025 (PH) are extracellular. An intramembrane region (pore-forming) is located at residues 1026-1066 (EEPSWSLAKDIVFHPYWMIFGEVYAYEIDVCANDSALPTIC). Residues 1067–1069 (GPG) are Extracellular-facing. The chain crosses the membrane as a helical span at residues 1070–1098 (TWLTPFLQAVYLFVQYIIMVNLLIAFFNN). Over 1099–1862 (VYLQVKAISN…EATNSVRLML (764 aa)) the chain is Cytoplasmic. 3 S-palmitoyl cysteine lipidation sites follow: C1143, C1144, and C1146. The residue at position 1163 (T1163) is a Phosphothreonine. Phosphoserine is present on residues S1191, S1193, S1224, S1255, and S1258. Residues 1198-1250 (RVTFERVEQMSIQIKEVGDRVNYIKRSLQSLDSQIGHLQDLSALTVDTLKTLT) adopt a coiled-coil conformation. The residue at position 1265 (T1265) is a Phosphothreonine. 9 positions are modified to phosphoserine: S1300, S1357, S1360, S1385, S1386, S1389, S1394, S1395, and S1403. The interval 1380 to 1418 (NQKLGSSPNSSPHMSSPPTKFSVSTPSQPSCKSHLESTT) is disordered. A compositionally biased stretch (low complexity) spans 1385–1397 (SSPNSSPHMSSPP). Residues 1398–1410 (TKFSVSTPSQPSC) are compositionally biased toward polar residues. Residue T1404 is modified to Phosphothreonine. Phosphoserine occurs at positions 1406 and 1445. A Phosphothreonine modification is found at T1454. Phosphoserine is present on S1455. Phosphothreonine occurs at positions 1466 and 1470. Positions 1485–1511 (TPTSLHSEQESCSRRASTEDSPDVDSR) are disordered. Residues S1491, S1497, S1501, S1510, and S1530 each carry the phosphoserine modification. Positions 1491 to 1502 (SEQESCSRRAST) are enriched in basic and acidic residues. Phosphothreonine is present on T1534. A Phosphoserine modification is found at S1540. Position 1548 is a phosphothreonine (T1548). S1564 and S1566 each carry phosphoserine. The residue at position 1580 (T1580) is a Phosphothreonine. The Alpha-type protein kinase domain occupies 1591 to 1821 (ILNNSMSSWS…CCRKLKLPDL (231 aa)). Phosphoserine is present on residues S1595 and S1612. The ADP site is built by G1618, G1619, L1620, R1621, and K1645. Residue S1657 is modified to Phosphoserine. T1682 is modified (phosphothreonine). ADP-binding residues include E1717, E1718, and M1720. H1750 contacts Zn(2+). The active-site Proton acceptor is the D1764. ADP is bound at residue D1774. S1776 carries the post-translational modification Phosphoserine. Zn(2+) contacts are provided by H1807, C1809, and C1813. T1827 is subject to Phosphothreonine. The interval 1840-1862 (DLNLQAGNSTKESEATNSVRLML) is disordered. Phosphoserine is present on residues S1848 and S1857.

It in the C-terminal section; belongs to the protein kinase superfamily. Alpha-type protein kinase family. ALPK subfamily. This sequence in the N-terminal section; belongs to the transient receptor (TC 1.A.4) family. LTrpC subfamily. TRPM7 sub-subfamily. Homodimer. Homotetramer. Forms heteromers with TRPM6; heteromeric channels are functionally different from the homomeric channels. Interacts with PLCB1. Zn(2+) is required as a cofactor. Palmitoylated; palmitoylation at Cys-1143, Cys-1144 and Cys-1146 promotes TRPM7 trafficking from the Golgi to the surface membrane. Post-translationally, autophosphorylated; autophosphorylation regulates TRPM7 kinase activity towards its substrates. In terms of processing, the C-terminal kinase domain can be cleaved from the channel segment in a cell-type-specific fashion. TRPM7 is cleaved by caspase-8, dissociating the kinase from the ion-conducting pore. The cleaved kinase fragments (M7CKs) can translocate to the cell nucleus and binds chromatin-remodeling complex proteins in a Zn(2+)-dependent manner to ultimately phosphorylate specific Ser/Thr residues of histones.

It is found in the cell membrane. It localises to the cytoplasmic vesicle membrane. The protein localises to the nucleus. The enzyme catalyses L-seryl-[protein] + ATP = O-phospho-L-seryl-[protein] + ADP + H(+). The catalysed reaction is L-threonyl-[protein] + ATP = O-phospho-L-threonyl-[protein] + ADP + H(+). It catalyses the reaction Mg(2+)(in) = Mg(2+)(out). It carries out the reaction Ca(2+)(in) = Ca(2+)(out). The enzyme catalyses Zn(2+)(in) = Zn(2+)(out). Its activity is regulated as follows. Channel displays constitutive activity. Channel activity is negatively regulated by cytosolic Mg(2+), Mg-ATP, low intracellular pH. Resting free cytosolic Mg(2+) and Mg-ATP concentrations seem to be sufficient to block native TRPM7 channel activity. TRPM7 channel activity is highly dependent on membrane levels of phosphatidylinositol 4,5 bisphosphate (PIP2). PIP2 hydrolysis negatively regulates TRPM7 channel activity. TRPM7 kinase activity does not affect channel activity. The kinase activity is controlled through the autophosphorylation of a serine/threonine-rich region located N-terminal to the catalytic domain. In terms of biological role, bifunctional protein that combines an ion channel with an intrinsic kinase domain, enabling it to modulate cellular functions either by conducting ions through the pore or by phosphorylating downstream proteins via its kinase domain. The channel is highly permeable to divalent cations, specifically calcium (Ca2+), magnesium (Mg2+) and zinc (Zn2+) and mediates their influx. Controls a wide range of biological processes such as Ca2(+), Mg(2+) and Zn(2+) homeostasis, vesicular Zn(2+) release channel and intracellular Ca(2+) signaling, embryonic development, immune responses, cell motility, proliferation and differentiation. The C-terminal alpha-kinase domain autophosphorylates cytoplasmic residues of TRPM7. TRPM7 phosphorylates SMAD2, suggesting that TRPM7 kinase may play a role in activating SMAD signaling pathways. In vitro, TRPM7 kinase phosphorylates ANXA1 (annexin A1), myosin II isoforms and a variety of proteins with diverse cellular functions. The cleaved channel exhibits substantially higher current and potentiates Fas receptor signaling. Functionally, the C-terminal kinase domain can be cleaved from the channel segment in a cell-type-specific fashion. In immune cells, the TRPM7 kinase domain is clipped from the channel domain by caspases in response to Fas-receptor stimulation. The cleaved kinase fragments can translocate to the nucleus, and bind chromatin-remodeling complex proteins in a Zn(2+)-dependent manner to ultimately phosphorylate specific Ser/Thr residues of histones known to be functionally important for cell differentiation and embryonic development. This Rattus norvegicus (Rat) protein is Transient receptor potential cation channel subfamily M member 7.